Here is a 256-residue protein sequence, read N- to C-terminus: Protein FixA (256 aa).

This sequence belongs to the ETF beta-subunit/FixA family. In terms of assembly, heterodimer of FixA and FixB.

Its pathway is amine and polyamine metabolism; carnitine metabolism. Required for anaerobic carnitine reduction. May bring reductant to CaiA. The protein is Protein FixA of Salmonella paratyphi B (strain ATCC BAA-1250 / SPB7).